The sequence spans 343 residues: Anthranilate phosphoribosyltransferase (343 aa).

5-phospho-alpha-D-ribose 1-diphosphate-binding positions include glycine 84, 87–88 (GD), threonine 92, 94–97 (NIST), 112–120 (KHGNRGVSS), and serine 124. Residue glycine 84 participates in anthranilate binding. Serine 96 is a Mg(2+) binding site. Residue asparagine 115 participates in anthranilate binding. Anthranilate is bound at residue arginine 170. Mg(2+) contacts are provided by aspartate 229 and glutamate 230.

This sequence belongs to the anthranilate phosphoribosyltransferase family. As to quaternary structure, homodimer. The cofactor is Mg(2+).

It catalyses the reaction N-(5-phospho-beta-D-ribosyl)anthranilate + diphosphate = 5-phospho-alpha-D-ribose 1-diphosphate + anthranilate. Its pathway is amino-acid biosynthesis; L-tryptophan biosynthesis; L-tryptophan from chorismate: step 2/5. Functionally, catalyzes the transfer of the phosphoribosyl group of 5-phosphorylribose-1-pyrophosphate (PRPP) to anthranilate to yield N-(5'-phosphoribosyl)-anthranilate (PRA). This is Anthranilate phosphoribosyltransferase from Burkholderia orbicola (strain MC0-3).